The primary structure comprises 67 residues: Large ribosomal subunit protein bL35 (67 aa).

Belongs to the bacterial ribosomal protein bL35 family.

This chain is Large ribosomal subunit protein bL35, found in Rhizobium etli (strain ATCC 51251 / DSM 11541 / JCM 21823 / NBRC 15573 / CFN 42).